The chain runs to 677 residues: Membrane-associated tyrosine- and threonine-specific cdc2-inhibitory kinase wee-1.3 (677 aa).

Residues 1 to 22 (MDDTEGNSSMDSIRNGQSSPLP) are compositionally biased toward polar residues. Positions 1-30 (MDDTEGNSSMDSIRNGQSSPLPQVTPRLPQ) are disordered. The Protein kinase domain occupies 108-355 (FQIDEIIGRG…SRDLLDHPVI (248 aa)). ATP is bound by residues 114-122 (IGRGSFGEV) and Lys137. Catalysis depends on Asp228, which acts as the Proton acceptor. Positions 233 and 246 each coordinate Mg(2+). Disordered regions lie at residues 478-526 (FDND…GTPR) and 632-677 (EPSN…GDEV). Positions 489–499 (ATCSSSNSSAI) are enriched in polar residues. A compositionally biased stretch (basic and acidic residues) spans 638-652 (TVDHHTILEQSESPR).

Belongs to the protein kinase superfamily. Ser/Thr protein kinase family. WEE1 subfamily.

The protein localises to the golgi apparatus membrane. It is found in the cytoplasm. The enzyme catalyses L-seryl-[protein] + ATP = O-phospho-L-seryl-[protein] + ADP + H(+). It carries out the reaction L-threonyl-[protein] + ATP = O-phospho-L-threonyl-[protein] + ADP + H(+). Its function is as follows. Acts as a negative regulator of entry into mitosis (G2 to M transition) by phosphorylation of the CDK1 kinase during oocyte maturation. Required for oocyte maturation, embryonic development, germline proliferation and initiation of meiosis during spermatogenesis. Required for chromosome structure during mitosis and negative regulation of nuclear envelope breakdown. The protein is Membrane-associated tyrosine- and threonine-specific cdc2-inhibitory kinase wee-1.3 (wee-1.3) of Caenorhabditis elegans.